The following is a 380-amino-acid chain: E3 ubiquitin-protein ligase Iruka (380 aa).

Positions A50–N92 are disordered. Low complexity-rich tracts occupy residues S55 to S68 and S74 to S89. The RING-type; atypical zinc-finger motif lies at C253–R294. The tract at residues E317–N367 is disordered. Residues N338–A350 show a composition bias toward low complexity.

Interacts (via N-terminus) with CG7546 (via Ubl domain).

It carries out the reaction S-ubiquitinyl-[E2 ubiquitin-conjugating enzyme]-L-cysteine + [acceptor protein]-L-lysine = [E2 ubiquitin-conjugating enzyme]-L-cysteine + N(6)-ubiquitinyl-[acceptor protein]-L-lysine.. Its pathway is protein modification; protein ubiquitination. Functionally, E3 ubiquitin-protein ligase that mediates E2-dependent, 'Lys-48'- and/or 'Lys-63'-linked polyubiquitination of substrates. Recognizes miRNA-empty Ago1 and triggers its degradation via polyubiquitination independently of the Bag6 complex. By targeting miRNA-empty Ago1, eliminates dysfunctional Ago1 not able to bind miRNA and thereby plays a role in the quality control of miRNA-mediated silencing. The sequence is that of E3 ubiquitin-protein ligase Iruka from Drosophila melanogaster (Fruit fly).